The chain runs to 248 residues: Tryptophan synthase alpha chain (248 aa).

Active-site proton acceptor residues include E36 and D47.

It belongs to the TrpA family. Tetramer of two alpha and two beta chains.

The enzyme catalyses (1S,2R)-1-C-(indol-3-yl)glycerol 3-phosphate + L-serine = D-glyceraldehyde 3-phosphate + L-tryptophan + H2O. Its pathway is amino-acid biosynthesis; L-tryptophan biosynthesis; L-tryptophan from chorismate: step 5/5. Functionally, the alpha subunit is responsible for the aldol cleavage of indoleglycerol phosphate to indole and glyceraldehyde 3-phosphate. This is Tryptophan synthase alpha chain from Pyrococcus abyssi (strain GE5 / Orsay).